Reading from the N-terminus, the 389-residue chain is Mesotocin receptor (389 aa).

Residues 1–50 (MEGLCLNLDCSELPNSSWVNSSMENQNHSSNSTRDPLKRNEEVAKVEVTV) are Extracellular-facing. 4 N-linked (GlcNAc...) asparagine glycosylation sites follow: N15, N20, N27, and N31. Residues 51 to 71 (LALILFLALAGNICVLLGIYI) form a helical membrane-spanning segment. The Cytoplasmic segment spans residues 72-87 (NRHKHSRMYFFMKHLS). Residues 88 to 108 (IADLVVAIFQVLPQLIWDITF) traverse the membrane as a helical segment. Over 109–119 (RFYAPDLVCRL) the chain is Extracellular. A disulfide bridge links C117 with C192. A helical membrane pass occupies residues 120–140 (VTYLQVVGMFASTYMLLLMSL). Residues 141–159 (DRCLAICQPLRSLHRRSDC) are Cytoplasmic-facing. Residues 160–180 (VYVLFTWILSFLLSTPQTVIF) form a helical membrane-spanning segment. The Extracellular portion of the chain corresponds to 181–207 (SLTEVGNGVYDCRADFIQPWGPKAYIT). A helical transmembrane segment spans residues 208-228 (WITLAVYIIPVMILSVCYGLI). The Cytoplasmic segment spans residues 229-275 (SYKIWQNIRLKTVCESNLRLSTSRRATLSRVSSVRLISKAKIRTVKM). Residues 276-296 (TFIIVLAYIVCWTPFFFVQMW) form a helical membrane-spanning segment. Residues 297 to 308 (SVWDPNPPKEAS) are Extracellular-facing. A helical transmembrane segment spans residues 309-329 (LFIIAMLLGSLNSCCNPWIYM). At 330-389 (LFTGHLFHDLLQSFLCCSARYLKTQQQGSDLSASRKSNSSTFVLSRKSSSQKSITQPSTA) the chain is on the cytoplasmic side. Positions 360–389 (LSASRKSNSSTFVLSRKSSSQKSITQPSTA) are disordered.

It belongs to the G-protein coupled receptor 1 family. Vasopressin/oxytocin receptor subfamily. As to expression, highly expressed in the bladder. Also expressed in kidney, brain and skeletal muscle.

The protein resides in the cell membrane. Functionally, binds to mesotocin and may play a role in the regulation of water and salt transport. The sequence is that of Mesotocin receptor from Rhinella marina (Cane toad).